Consider the following 247-residue polypeptide: Cell division protein ZapD (247 aa).

This sequence belongs to the ZapD family. In terms of assembly, interacts with FtsZ.

It is found in the cytoplasm. Functionally, cell division factor that enhances FtsZ-ring assembly. Directly interacts with FtsZ and promotes bundling of FtsZ protofilaments, with a reduction in FtsZ GTPase activity. The protein is Cell division protein ZapD of Enterobacter sp. (strain 638).